The following is a 201-amino-acid chain: Molybdenum cofactor guanylyltransferase (201 aa).

GTP is bound by residues 15–17 (LAG), Lys28, Asp74, and Asp104. Asp104 contributes to the Mg(2+) binding site.

Belongs to the MobA family. As to quaternary structure, monomer. Mg(2+) is required as a cofactor.

Its subcellular location is the cytoplasm. It carries out the reaction Mo-molybdopterin + GTP + H(+) = Mo-molybdopterin guanine dinucleotide + diphosphate. Functionally, transfers a GMP moiety from GTP to Mo-molybdopterin (Mo-MPT) cofactor (Moco or molybdenum cofactor) to form Mo-molybdopterin guanine dinucleotide (Mo-MGD) cofactor. This is Molybdenum cofactor guanylyltransferase from Pseudomonas syringae pv. syringae (strain B728a).